Consider the following 185-residue polypeptide: Auxin-responsive protein IAA34 (185 aa).

The EAR-like (transcriptional repression) signature appears at 63-67 (LGLSL). The PB1 domain occupies 92-180 (WGYVKVTMDG…ERLRITRRND (89 aa)).

This sequence belongs to the Aux/IAA family. As to quaternary structure, homodimers and heterodimers.

Its subcellular location is the nucleus. Aux/IAA proteins are short-lived transcriptional factors that function as repressors of early auxin response genes at low auxin concentrations. Repression is thought to result from the interaction with auxin response factors (ARFs), proteins that bind to the auxin-responsive promoter element (AuxRE). Formation of heterodimers with ARF proteins may alter their ability to modulate early auxin response genes expression. This is Auxin-responsive protein IAA34 (IAA34) from Arabidopsis thaliana (Mouse-ear cress).